A 420-amino-acid chain; its full sequence is MPLQVSDYSWQQTKTAVFLSLPLKGVCVRDTDVFCMENYLKVNFPPFLFEAFLYAPIDDESSKAKIGNDTIVFTLYKKEAAMWETLSVTGVDKEMMQRIREKSILQAQERAKEATEAKAAAKREDQKYALSVMMKIEEEERKKIEDMKENERIKATKELEAWKEYQRKAEEQKKIQREEKLCQKEKQIKEERKKIKYKSLTRNLASRNLAPKGRNSENIFTEKLKEDSIPAPRSVGSIKINFTPRVFPTALRESQVAEEEEWLHKQAEARRAMNTDIAELCDLKEEEKNPEWLKDKGNKLFATENYLAAINAYNLAIRLNNKMPLLYLNRAACHLKLKNLHKAIEDSSKALELLMPPVTDNANARMKAHVRRGTAFCQLELYVEGLQDYEAALKIDPSNKIVQIDAEKIRNVIQGTELKS.

Residues 3 to 87 (LQVSDYSWQQ…KEAAMWETLS (85 aa)) enclose the CS domain. Residues 7 to 103 (DYSWQQTKTA…EMMQRIREKS (97 aa)) are mediates interaction with ESR1 and STUB1. TPR repeat units lie at residues 290-323 (PEWL…NNKM), 324-357 (PLLY…LMPP), and 366-399 (MKAH…DPSN).

Interacts with ZMYND10. Interacts with STUB1. Interacts with ESR1 and ESR2. Interacts with DNAAF2. Interacts with CCT3, CCT4, CCT5 and CCT8. Interacts with DNAAF6/PIH1D3.

The protein resides in the nucleus. The protein localises to the cytoplasm. Its subcellular location is the cell projection. It is found in the neuron projection. It localises to the dynein axonemal particle. In terms of biological role, involved in neuronal migration during development of the cerebral neocortex. May regulate the stability and proteasomal degradation of the estrogen receptors that play an important role in neuronal differentiation, survival and plasticity. Axonemal dynein assembly factor required for ciliary motility. The polypeptide is Dynein axonemal assembly factor 4 (Pan troglodytes (Chimpanzee)).